Consider the following 1083-residue polypeptide: Protein HOS4 (1083 aa).

Disordered regions lie at residues 1 to 233 (MNET…RKLV) and 267 to 328 (SSLF…YRDS). Ser14 and Ser16 each carry phosphoserine. The span at 24–62 (TRREELEKISKQETSEEEDTAGKHEQRETLSEEVSDKFP) shows a compositional bias: basic and acidic residues. Thr37 is modified (phosphothreonine). Ser67 carries the post-translational modification Phosphoserine. Residues 67–85 (SFRSQTTSVHQATQNNLNA) show a composition bias toward polar residues. Residues 86–118 (KESEDLAHKNDASSHEGEVNGDSRPDDVPETNE) show a composition bias toward basic and acidic residues. Over residues 135–149 (PNVRNVDIQNHQPFS) the composition is skewed to polar residues. Over residues 151-166 (DQLRAMLKEPKRKTVD) the composition is skewed to basic and acidic residues. Acidic residues predominate over residues 167–185 (DFIEEEGLGAVEEEDLSDE). Residues 186 to 207 (VLEKNTTEPENVEKDIEYSDSD) show a composition bias toward basic and acidic residues. A compositionally biased stretch (polar residues) spans 277–293 (VKETNNNLSNMNSSPAQ). Ser290 carries the post-translational modification Phosphoserine. A compositionally biased stretch (low complexity) spans 300 to 310 (VSRSNDSNKSS). Basic residues predominate over residues 314–323 (VSKRPKQKKG). ANK repeat units lie at residues 329–359 (GGRT…DIND), 363–392 (AGNT…DVNI), and 398–427 (FGDT…DPTI). The tract at residues 472–516 (AGIHNDKSKNGNNAHTIDQPPFDNTTKAKNEKAADSPSMASNIDE) is disordered. The span at 481–496 (NGNNAHTIDQPPFDNT) shows a compositional bias: polar residues. Position 507 is a phosphoserine (Ser507). ANK repeat units follow at residues 532–561 (AGKE…KIDL) and 593–622 (NKTS…DPTK). Disordered regions lie at residues 661 to 742 (HSED…DDNE) and 762 to 790 (DEEK…ISKI). Over residues 665–675 (NNDDDDDDDNN) the composition is skewed to acidic residues. Ser698 carries the phosphoserine modification. At Thr700 the chain carries Phosphothreonine. A compositionally biased stretch (basic and acidic residues) spans 721-740 (NNDRDVKESTTSDSRKRLDD). A Phosphoserine modification is found at Ser778.

As to quaternary structure, identified in the Set3C complex with HOS2, HST1, SNT1, SIF2, CPR1 and SET3.

Unknown. Component of the Set3C complex, which is required to repress early/middle sporulation genes during meiosis. In Saccharomyces cerevisiae (strain ATCC 204508 / S288c) (Baker's yeast), this protein is Protein HOS4 (HOS4).